A 383-amino-acid polypeptide reads, in one-letter code: Lipid-A-disaccharide synthase (383 aa).

This sequence belongs to the LpxB family.

It carries out the reaction a lipid X + a UDP-2-N,3-O-bis[(3R)-3-hydroxyacyl]-alpha-D-glucosamine = a lipid A disaccharide + UDP + H(+). It functions in the pathway bacterial outer membrane biogenesis; LPS lipid A biosynthesis. Condensation of UDP-2,3-diacylglucosamine and 2,3-diacylglucosamine-1-phosphate to form lipid A disaccharide, a precursor of lipid A, a phosphorylated glycolipid that anchors the lipopolysaccharide to the outer membrane of the cell. The chain is Lipid-A-disaccharide synthase from Aliivibrio salmonicida (strain LFI1238) (Vibrio salmonicida (strain LFI1238)).